The chain runs to 432 residues: DnaJ-like protein 1 (432 aa).

A J domain is found at 4–73 (DTEYYDLLGV…RAKYDKYGRK (70 aa)). The disordered stretch occupies residues 117 to 187 (NAEDEAEKEK…KKNEQVGAEA (71 aa)).

Belongs to the DnaJ family. Interacts with SLN1.

It is found in the cytoplasm. In terms of biological role, required for peroxisomal protein import which maintains the function of peroxisomes. The protein is DnaJ-like protein 1 (DJP1) of Saccharomyces cerevisiae (strain ATCC 204508 / S288c) (Baker's yeast).